Consider the following 506-residue polypeptide: GMP synthase [glutamine-hydrolyzing] (506 aa).

A Glutamine amidotransferase type-1 domain is found at 2–190 (SIVILDFGSQ…FLDICGVTRD (189 aa)). Cys-79 serves as the catalytic Nucleophile. Residues His-165 and Glu-167 contribute to the active site. The 191-residue stretch at 191–381 (WNAEHIVDEL…LGLPDHIRMR (191 aa)) folds into the GMPS ATP-PPase domain. An ATP-binding site is contributed by 219 to 225 (SGGVDSS).

In terms of assembly, homodimer.

It carries out the reaction XMP + L-glutamine + ATP + H2O = GMP + L-glutamate + AMP + diphosphate + 2 H(+). The protein operates within purine metabolism; GMP biosynthesis; GMP from XMP (L-Gln route): step 1/1. Its function is as follows. Catalyzes the synthesis of GMP from XMP. This is GMP synthase [glutamine-hydrolyzing] (guaA) from Deinococcus radiodurans (strain ATCC 13939 / DSM 20539 / JCM 16871 / CCUG 27074 / LMG 4051 / NBRC 15346 / NCIMB 9279 / VKM B-1422 / R1).